We begin with the raw amino-acid sequence, 507 residues long: Transcription factor SOX-9 (507 aa).

Disordered regions lie at residues 1–67 and 160–250; these read MNLL…SEED and RLRV…AGKV. Low complexity predominate over residues 30–41; sequence SAGSPCPSGSGS. Over residues 42 to 52 the composition is skewed to polar residues; sequence DTENTRPQENT. Basic and acidic residues-rich tracts occupy residues 56–67 and 160–174; these read GEPDLKKESEED and RLRV…DYKY. Residues 63 to 103 are dimerization (DIM); sequence ESEEDKFPVCIREAVSQVLKGYDWTLVPMPVRVNGSSKNKP. Positions 63-103 are PQA; that stretch reads ESEEDKFPVCIREAVSQVLKGYDWTLVPMPVRVNGSSKNKP. Serine 64 is subject to Phosphoserine; by PKA. Residues 105-173 constitute a DNA-binding region (HMG box); sequence VKRPMNAFMV…QHKKDHPDYK (69 aa). Residue serine 211 is modified to Phosphoserine; by PKA. The tract at residues 224-307 is transactivation domain (TAM); sequence PGEHSGQSQG…LPPNGHPGVP (84 aa). 2 consecutive short sequence motifs (9aaTAD) follow at residues 275–284 and 290–298; these read IGELSSDVIS and DVNEFDQYL. The interval 335–429 is disordered; sequence WMSKQQAPPP…PFNLPHYSPS (95 aa). Over residues 341–369 the composition is skewed to pro residues; it reads APPPPPQQPPQAPQAPQAPPQQQAPPQQP. Polar residues predominate over residues 378–420; that stretch reads HTLTTLSSEPGQSQRTHIKTEQLSPSHYSEQQQHSPQQISYSP. The segment at 392–507 is transactivation domain (TAC); the sequence is RTHIKTEQLS…QPVYTQLTRP (116 aa). Residue lysine 396 forms a Glycyl lysine isopeptide (Lys-Gly) (interchain with G-Cter in ubiquitin) linkage. The short motif at 458–466 is the 9aaTAD 3 element; the sequence is SGLYSTFTY. Positions 477-507 are disordered; that stretch reads PIADTSGVPSIPQTHSPQHWEQPVYTQLTRP. The segment covering 483–507 has biased composition (polar residues); it reads GVPSIPQTHSPQHWEQPVYTQLTRP.

Homodimer; homodimerization is required for activity. Interacts (via C-terminus) with ZNF219; forming a complex that binds to the COL2A1 promoter and activates COL2A1 expression. Interacts with DDRGK1. Interacts with EP300/p300. Interacts with beta-catenin (CTNNB1); inhibiting CTNNB1 activity by competing with the binding sites of TCF/LEF within CTNNB1. In terms of processing, acetylated; acetylation impairs nuclear localization and ability to transactivate expression of target genes. Deacetylated by SIRT1. Post-translationally, phosphorylation at Ser-64 and Ser-211 by PKA increases transcriptional activity and may help delay chondrocyte maturation downstream of PTHLH/PTHrP signaling. Phosphorylation at either Ser-64 or Ser-211 is required for sumoylation, but phosphorylation is not dependent on sumoylation. Phosphorylated on tyrosine residues; tyrosine dephosphorylation by PTPN11/SHP2 blocks SOX9 phosphorylation by PKA and subsequent SUMOylation. Sumoylated; phosphorylation at either Ser-64 or Ser-211 is required for sumoylation. Sumoylation is induced by BMP signaling pathway. In terms of processing, ubiquitinated; ubiquitination leads to proteasomal degradation and is negatively regulated by DDRGK1. As to expression, expressed in the intestinal epithelium (at protein level). Expressed in progenitor cells in various organs, including chondroprogenitors, osteoprogenitors and preadipocytes, but is not expressed in most differentiated cell types such as osteoblasts and adipocytes, with the exception of chondrocytes. Highly expressed in developing chondrogenic tissues. Also expressed in some non-chondrogenic tissues such as notochord, otic vesicle and neural tube.

The protein resides in the nucleus. Transcription factor that plays a key role in chondrocytes differentiation and skeletal development. Specifically binds the 5'-ACAAAG-3' DNA motif present in enhancers and super-enhancers and promotes expression of genes important for chondrogenesis, including cartilage matrix protein-coding genes COL2A1, COL4A2, COL9A1, COL11A2 and ACAN, SOX5 and SOX6. Also binds to some promoter regions. Plays a central role in successive steps of chondrocyte differentiation. Absolutely required for precartilaginous condensation, the first step in chondrogenesis during which skeletal progenitors differentiate into prechondrocytes. Together with SOX5 and SOX6, required for overt chondrogenesis when condensed prechondrocytes differentiate into early stage chondrocytes, the second step in chondrogenesis. Later, required to direct hypertrophic maturation and block osteoblast differentiation of growth plate chondrocytes: maintains chondrocyte columnar proliferation, delays prehypertrophy and then prevents osteoblastic differentiation of chondrocytes by lowering beta-catenin (CTNNB1) signaling and RUNX2 expression. Also required for chondrocyte hypertrophy, both indirectly, by keeping the lineage fate of chondrocytes, and directly, by remaining present in upper hypertrophic cells and transactivating COL10A1 along with MEF2C. Low lipid levels are the main nutritional determinant for chondrogenic commitment of skeletal progenitor cells: when lipids levels are low, FOXO (FOXO1 and FOXO3) transcription factors promote expression of SOX9, which induces chondrogenic commitment and suppresses fatty acid oxidation. Mechanistically, helps, but is not required, to remove epigenetic signatures of transcriptional repression and deposit active promoter and enhancer marks at chondrocyte-specific genes. Acts in cooperation with the Hedgehog pathway-dependent GLI (GLI1 and GLI3) transcription factors. In addition to cartilage development, also acts as a regulator of proliferation and differentiation in epithelial stem/progenitor cells: involved in the lung epithelium during branching morphogenesis, by balancing proliferation and differentiation and regulating the extracellular matrix. Controls epithelial branching during kidney development. The chain is Transcription factor SOX-9 from Mus musculus (Mouse).